Reading from the N-terminus, the 304-residue chain is UDP-N-acetylenolpyruvoylglucosamine reductase (304 aa).

The FAD-binding PCMH-type domain occupies K31 to G196. Residue R175 is part of the active site. The active-site Proton donor is S225. E295 is an active-site residue.

The protein belongs to the MurB family. It depends on FAD as a cofactor.

The protein resides in the cytoplasm. The enzyme catalyses UDP-N-acetyl-alpha-D-muramate + NADP(+) = UDP-N-acetyl-3-O-(1-carboxyvinyl)-alpha-D-glucosamine + NADPH + H(+). Its pathway is cell wall biogenesis; peptidoglycan biosynthesis. In terms of biological role, cell wall formation. In Streptococcus thermophilus (strain ATCC BAA-491 / LMD-9), this protein is UDP-N-acetylenolpyruvoylglucosamine reductase.